The primary structure comprises 388 residues: MKVHEHQAKEIFARYGLPVPKGYPAFTVEEAVEAAQQLGKFPVVVKAQIHAGGRGKAGGVKLANNLDEVQKYAAELLGKTLVTFQTGPEGLPVSRIYIEEGTNIDKEFYVAITLDRSKSKLIIMASSEGGMEIEEVAAKNPEAIITEVIDPFLGLRPYQAREIALKLGLPKNLLNKAAGLFVKLYELYMKEDASMVEINPLVLTKEGNIVILDAKVDFDDNALFRHPDIMEMEDPTQESELEVKAKQYNLNYIKLDGNIACMVNGAGLAMATMDTIKLAGGEPANFLDVGGSANAEQIANAFKIILSDPNVKAIFINIFGGILRCDRLAEGIIQASKEVNPHVPIIVRMEGTNVELGKKMLAESGLDLIPADTMWEGAKKAVELASKA.

Residues 9–244 (KEIFARYGLP…PTQESELEVK (236 aa)) enclose the ATP-grasp domain. ATP is bound by residues Lys-46, 53 to 55 (GRG), Glu-99, Thr-102, and Glu-107. Mg(2+) contacts are provided by Asn-199 and Asp-213. Substrate-binding positions include Asn-264 and 321-323 (GIL).

It belongs to the succinate/malate CoA ligase beta subunit family. In terms of assembly, heterotetramer of two alpha and two beta subunits. It depends on Mg(2+) as a cofactor.

The catalysed reaction is succinate + ATP + CoA = succinyl-CoA + ADP + phosphate. The enzyme catalyses GTP + succinate + CoA = succinyl-CoA + GDP + phosphate. It participates in carbohydrate metabolism; tricarboxylic acid cycle; succinate from succinyl-CoA (ligase route): step 1/1. Its function is as follows. Succinyl-CoA synthetase functions in the citric acid cycle (TCA), coupling the hydrolysis of succinyl-CoA to the synthesis of either ATP or GTP and thus represents the only step of substrate-level phosphorylation in the TCA. The beta subunit provides nucleotide specificity of the enzyme and binds the substrate succinate, while the binding sites for coenzyme A and phosphate are found in the alpha subunit. The sequence is that of Succinate--CoA ligase [ADP-forming] subunit beta from Persephonella marina (strain DSM 14350 / EX-H1).